The primary structure comprises 316 residues: 4-hydroxy-3-methylbut-2-enyl diphosphate reductase (316 aa).

Cysteine 12 serves as a coordination point for [4Fe-4S] cluster. (2E)-4-hydroxy-3-methylbut-2-enyl diphosphate is bound by residues histidine 43 and histidine 81. Dimethylallyl diphosphate contacts are provided by histidine 43 and histidine 81. Residues histidine 43 and histidine 81 each contribute to the isopentenyl diphosphate site. Position 103 (cysteine 103) interacts with [4Fe-4S] cluster. Histidine 131 contributes to the (2E)-4-hydroxy-3-methylbut-2-enyl diphosphate binding site. Dimethylallyl diphosphate is bound at residue histidine 131. An isopentenyl diphosphate-binding site is contributed by histidine 131. Glutamate 133 acts as the Proton donor in catalysis. Threonine 170 is a (2E)-4-hydroxy-3-methylbut-2-enyl diphosphate binding site. Cysteine 198 contributes to the [4Fe-4S] cluster binding site. Positions 226, 228, and 271 each coordinate (2E)-4-hydroxy-3-methylbut-2-enyl diphosphate. Serine 226, asparagine 228, and serine 271 together coordinate dimethylallyl diphosphate. Positions 226, 228, and 271 each coordinate isopentenyl diphosphate.

The protein belongs to the IspH family. The cofactor is [4Fe-4S] cluster.

The enzyme catalyses isopentenyl diphosphate + 2 oxidized [2Fe-2S]-[ferredoxin] + H2O = (2E)-4-hydroxy-3-methylbut-2-enyl diphosphate + 2 reduced [2Fe-2S]-[ferredoxin] + 2 H(+). It catalyses the reaction dimethylallyl diphosphate + 2 oxidized [2Fe-2S]-[ferredoxin] + H2O = (2E)-4-hydroxy-3-methylbut-2-enyl diphosphate + 2 reduced [2Fe-2S]-[ferredoxin] + 2 H(+). It functions in the pathway isoprenoid biosynthesis; dimethylallyl diphosphate biosynthesis; dimethylallyl diphosphate from (2E)-4-hydroxy-3-methylbutenyl diphosphate: step 1/1. The protein operates within isoprenoid biosynthesis; isopentenyl diphosphate biosynthesis via DXP pathway; isopentenyl diphosphate from 1-deoxy-D-xylulose 5-phosphate: step 6/6. Its function is as follows. Catalyzes the conversion of 1-hydroxy-2-methyl-2-(E)-butenyl 4-diphosphate (HMBPP) into a mixture of isopentenyl diphosphate (IPP) and dimethylallyl diphosphate (DMAPP). Acts in the terminal step of the DOXP/MEP pathway for isoprenoid precursor biosynthesis. This Bacillus cereus (strain AH820) protein is 4-hydroxy-3-methylbut-2-enyl diphosphate reductase.